The primary structure comprises 273 residues: Putative phosphoenolpyruvate synthase regulatory protein (273 aa).

ADP is bound at residue 153–160 (GVSRSGKT).

This sequence belongs to the pyruvate, phosphate/water dikinase regulatory protein family. PSRP subfamily.

It catalyses the reaction [pyruvate, water dikinase] + ADP = [pyruvate, water dikinase]-phosphate + AMP + H(+). The catalysed reaction is [pyruvate, water dikinase]-phosphate + phosphate + H(+) = [pyruvate, water dikinase] + diphosphate. Its function is as follows. Bifunctional serine/threonine kinase and phosphorylase involved in the regulation of the phosphoenolpyruvate synthase (PEPS) by catalyzing its phosphorylation/dephosphorylation. The chain is Putative phosphoenolpyruvate synthase regulatory protein from Paracidovorax citrulli (strain AAC00-1) (Acidovorax citrulli).